The chain runs to 181 residues: HGPRTase-like protein 2 (181 aa).

Belongs to the purine/pyrimidine phosphoribosyltransferase family. Archaeal HPRT subfamily.

In terms of biological role, may catalyze a purine salvage reaction, the substrate is unknown. The sequence is that of HGPRTase-like protein 2 from Natrialba magadii (strain ATCC 43099 / DSM 3394 / CCM 3739 / CIP 104546 / IAM 13178 / JCM 8861 / NBRC 102185 / NCIMB 2190 / MS3) (Natronobacterium magadii).